We begin with the raw amino-acid sequence, 342 residues long: S-adenosylmethionine:tRNA ribosyltransferase-isomerase (342 aa).

It belongs to the QueA family. Monomer.

The protein resides in the cytoplasm. The catalysed reaction is 7-aminomethyl-7-carbaguanosine(34) in tRNA + S-adenosyl-L-methionine = epoxyqueuosine(34) in tRNA + adenine + L-methionine + 2 H(+). It participates in tRNA modification; tRNA-queuosine biosynthesis. Its function is as follows. Transfers and isomerizes the ribose moiety from AdoMet to the 7-aminomethyl group of 7-deazaguanine (preQ1-tRNA) to give epoxyqueuosine (oQ-tRNA). In Listeria monocytogenes serotype 4b (strain CLIP80459), this protein is S-adenosylmethionine:tRNA ribosyltransferase-isomerase.